A 238-amino-acid chain; its full sequence is Probable transcriptional regulatory protein SSU98_0387 (238 aa).

It belongs to the TACO1 family. YeeN subfamily.

The protein resides in the cytoplasm. The protein is Probable transcriptional regulatory protein SSU98_0387 of Streptococcus suis (strain 98HAH33).